We begin with the raw amino-acid sequence, 332 residues long: 2,3-diketo-L-gulonate reductase (332 aa).

His-44 serves as the catalytic Proton donor. NAD(+) is bound by residues 168–174, 224–225, and 304–306; these read ITMVDMS, WK, and GHE.

Belongs to the LDH2/MDH2 oxidoreductase family. DlgD subfamily. As to quaternary structure, homodimer.

It is found in the cytoplasm. It carries out the reaction 3-dehydro-L-gulonate + NAD(+) = 2,3-dioxo-L-gulonate + NADH + H(+). The enzyme catalyses 3-dehydro-L-gulonate + NADP(+) = 2,3-dioxo-L-gulonate + NADPH + H(+). In terms of biological role, catalyzes the reduction of 2,3-diketo-L-gulonate in the presence of NADH, to form 3-keto-L-gulonate. The chain is 2,3-diketo-L-gulonate reductase from Escherichia coli O17:K52:H18 (strain UMN026 / ExPEC).